Here is a 115-residue protein sequence, read N- to C-terminus: UPF0145 protein lp_2083 (115 aa).

This sequence belongs to the UPF0145 family.

This chain is UPF0145 protein lp_2083, found in Lactiplantibacillus plantarum (strain ATCC BAA-793 / NCIMB 8826 / WCFS1) (Lactobacillus plantarum).